Reading from the N-terminus, the 314-residue chain is DNA-directed RNA polymerase subunit alpha (314 aa).

The interval 1–229 (MLESKLKAPV…EHLNYFANPE (229 aa)) is alpha N-terminal domain (alpha-NTD). The alpha C-terminal domain (alpha-CTD) stretch occupies residues 246–314 (SAEEDLDLPL…LAKKGFTLKE (69 aa)).

The protein belongs to the RNA polymerase alpha chain family. In terms of assembly, homodimer. The RNAP catalytic core consists of 2 alpha, 1 beta, 1 beta' and 1 omega subunit. When a sigma factor is associated with the core the holoenzyme is formed, which can initiate transcription.

It carries out the reaction RNA(n) + a ribonucleoside 5'-triphosphate = RNA(n+1) + diphosphate. Functionally, DNA-dependent RNA polymerase catalyzes the transcription of DNA into RNA using the four ribonucleoside triphosphates as substrates. The sequence is that of DNA-directed RNA polymerase subunit alpha (rpoA) from Thermus aquaticus.